The primary structure comprises 326 residues: DNA-directed RNA polymerase subunit alpha (326 aa).

Residues M1–E232 form an alpha N-terminal domain (alpha-NTD) region. The interval F246 to E326 is alpha C-terminal domain (alpha-CTD).

The protein belongs to the RNA polymerase alpha chain family. Homodimer. The RNAP catalytic core consists of 2 alpha, 1 beta, 1 beta' and 1 omega subunit. When a sigma factor is associated with the core the holoenzyme is formed, which can initiate transcription.

The catalysed reaction is RNA(n) + a ribonucleoside 5'-triphosphate = RNA(n+1) + diphosphate. DNA-dependent RNA polymerase catalyzes the transcription of DNA into RNA using the four ribonucleoside triphosphates as substrates. This is DNA-directed RNA polymerase subunit alpha from Ruthia magnifica subsp. Calyptogena magnifica.